A 209-amino-acid chain; its full sequence is Outer-membrane lipoprotein carrier protein (209 aa).

A signal peptide spans 1–23; sequence MKNLLKKSLLGLAFLSLNGFAFA.

The protein belongs to the LolA family. As to quaternary structure, monomer.

The protein localises to the periplasm. In terms of biological role, participates in the translocation of lipoproteins from the inner membrane to the outer membrane. Only forms a complex with a lipoprotein if the residue after the N-terminal Cys is not an aspartate (The Asp acts as a targeting signal to indicate that the lipoprotein should stay in the inner membrane). The protein is Outer-membrane lipoprotein carrier protein of Glaesserella parasuis serovar 5 (strain SH0165) (Haemophilus parasuis).